The chain runs to 331 residues: Serpentine receptor class alpha-9 (331 aa).

A run of 7 helical transmembrane segments spans residues 26–46, 58–78, 104–124, 142–162, 189–209, 238–258, and 275–295; these read IDLL…QLVL, LILE…IEAI, YLKV…GLMI, IIGF…GKLF, YFTV…LLKI, VCFL…GVGA, and LCVV…LLLI.

The protein belongs to the nematode receptor-like protein sra family.

The protein localises to the membrane. The sequence is that of Serpentine receptor class alpha-9 (sra-9) from Caenorhabditis elegans.